Reading from the N-terminus, the 181-residue chain is Protein GrpE (181 aa).

Residues 1-20 (MENTQENPASQSAEENGSET) are compositionally biased toward polar residues. Residues 1–39 (MENTQENPASQSAEENGSETQAAQDAAPAAEAADAALAE) are disordered. A compositionally biased stretch (low complexity) spans 21-39 (QAAQDAAPAAEAADAALAE).

This sequence belongs to the GrpE family. As to quaternary structure, homodimer.

The protein localises to the cytoplasm. In terms of biological role, participates actively in the response to hyperosmotic and heat shock by preventing the aggregation of stress-denatured proteins, in association with DnaK and GrpE. It is the nucleotide exchange factor for DnaK and may function as a thermosensor. Unfolded proteins bind initially to DnaJ; upon interaction with the DnaJ-bound protein, DnaK hydrolyzes its bound ATP, resulting in the formation of a stable complex. GrpE releases ADP from DnaK; ATP binding to DnaK triggers the release of the substrate protein, thus completing the reaction cycle. Several rounds of ATP-dependent interactions between DnaJ, DnaK and GrpE are required for fully efficient folding. The sequence is that of Protein GrpE from Burkholderia multivorans (strain ATCC 17616 / 249).